Reading from the N-terminus, the 116-residue chain is MAVLVLLFCLVTFPSCVLSQVQLKQSGPGLVQPSQSLSITCTVSGFSLTSYGVHWVRQPPGKGLEWLGVIWSGGSTDYNAAFISRLSISKDNSKSQVFFKMNSLQADDTAIYYCAK.

A signal peptide spans 1 to 19 (MAVLVLLFCLVTFPSCVLS). The 97-residue stretch at 20–116 (QVQLKQSGPG…DDTAIYYCAK (97 aa)) folds into the Ig-like domain. Cys41 and Cys114 form a disulfide bridge.

This Mus musculus (Mouse) protein is Immunoglobulin heavy variable 2-4.